The chain runs to 100 residues: Carboxysome shell vertex protein CcmL (100 aa).

The BMV domain maps to 1 to 83; the sequence is MQIGRVRGTV…VDAVVIGIID (83 aa).

The protein belongs to the CcmL/EutN family. CcmL subfamily. In terms of assembly, homopentamer. Interacts with full-length CcmM.

The protein resides in the carboxysome. In terms of biological role, probably forms vertices in the carboxysome, a polyhedral inclusion where RuBisCO (ribulose bisphosphate carboxylase, rbcL-rbcS) is sequestered. Has been modeled to induce curvature upon insertion into an otherwise flat hexagonal molecular layer of CcmK subunits. This Gloeobacter violaceus (strain ATCC 29082 / PCC 7421) protein is Carboxysome shell vertex protein CcmL.